The chain runs to 76 residues: Conotoxin MaIr332 (76 aa).

Positions 1 to 21 (MKLTCVIVAVLFLTAWTFVTA) are cleaved as a signal peptide. The propeptide occupies 22–48 (DDSGNGLENLFSKAHHEMKNPKDSKLN). 3 cysteine pairs are disulfide-bonded: C51/C66, C58/C70, and C65/C75.

The protein belongs to the conotoxin O1 superfamily. Expressed by the venom duct.

It is found in the secreted. This is Conotoxin MaIr332 from Conus marmoreus (Marble cone).